Here is a 170-residue protein sequence, read N- to C-terminus: Xanthine-guanine phosphoribosyltransferase (170 aa).

Residues 41–42 (RG) and 98–106 (DDLTDTGKT) each bind 5-phospho-alpha-D-ribose 1-diphosphate. Asp99 lines the Mg(2+) pocket. Position 102 (Asp102) interacts with guanine. Residue Asp102 participates in xanthine binding. 102–106 (DTGKT) contributes to the GMP binding site.

It belongs to the purine/pyrimidine phosphoribosyltransferase family. XGPT subfamily. As to quaternary structure, homotetramer. Mg(2+) serves as cofactor.

The protein resides in the cell inner membrane. It catalyses the reaction GMP + diphosphate = guanine + 5-phospho-alpha-D-ribose 1-diphosphate. It carries out the reaction XMP + diphosphate = xanthine + 5-phospho-alpha-D-ribose 1-diphosphate. The enzyme catalyses IMP + diphosphate = hypoxanthine + 5-phospho-alpha-D-ribose 1-diphosphate. It participates in purine metabolism; GMP biosynthesis via salvage pathway; GMP from guanine: step 1/1. It functions in the pathway purine metabolism; XMP biosynthesis via salvage pathway; XMP from xanthine: step 1/1. Purine salvage pathway enzyme that catalyzes the transfer of the ribosyl-5-phosphate group from 5-phospho-alpha-D-ribose 1-diphosphate (PRPP) to the N9 position of the 6-oxopurines guanine and xanthine to form the corresponding ribonucleotides GMP (guanosine 5'-monophosphate) and XMP (xanthosine 5'-monophosphate), with the release of PPi. To a lesser extent, also acts on hypoxanthine. This chain is Xanthine-guanine phosphoribosyltransferase, found in Brucella abortus (strain 2308).